Consider the following 379-residue polypeptide: uncharacterized protein (379 aa).

The protein belongs to the glycosyltransferase 28 family.

This is an uncharacterized protein from Methanosarcina mazei (strain ATCC BAA-159 / DSM 3647 / Goe1 / Go1 / JCM 11833 / OCM 88) (Methanosarcina frisia).